We begin with the raw amino-acid sequence, 50 residues long: MLTKYALVAIIVLCCTVLGFTLMVGDSLCELSIRERGMEFKAVLAYESKK.

Residues 5–25 (YALVAIIVLCCTVLGFTLMVG) traverse the membrane as a helical segment.

Belongs to the Hok/Gef family.

The protein localises to the cell inner membrane. In terms of biological role, toxic component of a type I toxin-antitoxin (TA) system. When overexpressed kills cells within minutes; causes collapse of the transmembrane potential and arrest of respiration. Its toxic effect is probably neutralized by an antisense antitoxin Sok RNA. The sequence is that of Putative protein HokG (hokG) from Escherichia coli O157:H7.